Consider the following 382-residue polypeptide: Alkanesulfonate monooxygenase (382 aa).

It belongs to the SsuD family.

The enzyme catalyses an alkanesulfonate + FMNH2 + O2 = an aldehyde + FMN + sulfite + H2O + 2 H(+). Its function is as follows. Catalyzes the desulfonation of aliphatic sulfonates. The polypeptide is Alkanesulfonate monooxygenase (Pseudomonas putida (strain ATCC 47054 / DSM 6125 / CFBP 8728 / NCIMB 11950 / KT2440)).